A 526-amino-acid chain; its full sequence is Acetyl-CoA hydrolase (526 aa).

277–281 (GIGNI) is a CoA binding site. Residue Glu-302 is the 5-glutamyl coenzyme A thioester intermediate of the active site. CoA contacts are provided by Asn-392 and Gly-396.

The protein belongs to the acetyl-CoA hydrolase/transferase family.

It is found in the cytoplasm. The catalysed reaction is acetyl-CoA + H2O = acetate + CoA + H(+). In terms of biological role, presumably involved in regulating the intracellular acetyl-CoA pool for fatty acid and cholesterol synthesis and fatty acid oxidation. In Candida glabrata (strain ATCC 2001 / BCRC 20586 / JCM 3761 / NBRC 0622 / NRRL Y-65 / CBS 138) (Yeast), this protein is Acetyl-CoA hydrolase (ACH1).